Reading from the N-terminus, the 492-residue chain is Bifunctional purine biosynthesis protein PurH (492 aa).

One can recognise an MGS-like domain in the interval 1–144; it reads MRKALLSVSD…KNFRHVITVV (144 aa).

It belongs to the PurH family.

The enzyme catalyses (6R)-10-formyltetrahydrofolate + 5-amino-1-(5-phospho-beta-D-ribosyl)imidazole-4-carboxamide = 5-formamido-1-(5-phospho-D-ribosyl)imidazole-4-carboxamide + (6S)-5,6,7,8-tetrahydrofolate. It catalyses the reaction IMP + H2O = 5-formamido-1-(5-phospho-D-ribosyl)imidazole-4-carboxamide. It participates in purine metabolism; IMP biosynthesis via de novo pathway; 5-formamido-1-(5-phospho-D-ribosyl)imidazole-4-carboxamide from 5-amino-1-(5-phospho-D-ribosyl)imidazole-4-carboxamide (10-formyl THF route): step 1/1. It functions in the pathway purine metabolism; IMP biosynthesis via de novo pathway; IMP from 5-formamido-1-(5-phospho-D-ribosyl)imidazole-4-carboxamide: step 1/1. The chain is Bifunctional purine biosynthesis protein PurH from Macrococcus caseolyticus (strain JCSC5402) (Macrococcoides caseolyticum).